A 525-amino-acid polypeptide reads, in one-letter code: GMP synthase [glutamine-hydrolyzing] (525 aa).

In terms of domain architecture, Glutamine amidotransferase type-1 spans 8-207 (KILILDFGSQ…ALDICECEAN (200 aa)). Cys-85 acts as the Nucleophile in catalysis. Catalysis depends on residues His-181 and Glu-183. Positions 208–400 (WKPTSIIEDA…LGLPYDMLYR (193 aa)) constitute a GMPS ATP-PPase domain. 235 to 241 (SGGVDSS) lines the ATP pocket.

In terms of assembly, homodimer.

The catalysed reaction is XMP + L-glutamine + ATP + H2O = GMP + L-glutamate + AMP + diphosphate + 2 H(+). The protein operates within purine metabolism; GMP biosynthesis; GMP from XMP (L-Gln route): step 1/1. Its function is as follows. Catalyzes the synthesis of GMP from XMP. The chain is GMP synthase [glutamine-hydrolyzing] from Shewanella sediminis (strain HAW-EB3).